A 172-amino-acid polypeptide reads, in one-letter code: Ribosome maturation factor RimM (172 aa).

Residues P100 to F172 form the PRC barrel domain.

It belongs to the RimM family. In terms of assembly, binds ribosomal protein uS19.

The protein localises to the cytoplasm. In terms of biological role, an accessory protein needed during the final step in the assembly of 30S ribosomal subunit, possibly for assembly of the head region. Essential for efficient processing of 16S rRNA. May be needed both before and after RbfA during the maturation of 16S rRNA. It has affinity for free ribosomal 30S subunits but not for 70S ribosomes. The chain is Ribosome maturation factor RimM from Methylococcus capsulatus (strain ATCC 33009 / NCIMB 11132 / Bath).